The sequence spans 309 residues: Large ribosomal subunit protein mL45 (309 aa).

The protein belongs to the mitochondrion-specific ribosomal protein mL45 family. As to quaternary structure, component of the mitochondrial ribosome large subunit (39S) which comprises a 16S rRNA and about 50 distinct proteins.

The protein localises to the mitochondrion. Functionally, component of the mitochondrial large ribosomal subunit (mt-LSU). Within the mitochondrial ribosomes, required to direct the nascent polypeptide toward the tunnel exit and position the exit at a distance from the membrane surface. This chain is Large ribosomal subunit protein mL45 (mrpl45), found in Xenopus tropicalis (Western clawed frog).